We begin with the raw amino-acid sequence, 985 residues long: MSTGLTPPPQPIKRPPKAVTWIFAIIALVILIAPMSVGFYTDWLWFGEVDFRGVFSKVIVTRIVLFVIFALIAGFVTWLAGYFVTKLRPDEMSAFDTQSPVYQYRQMIENSLRRVMVIIPIFVALLAGLIGQRSWRTVQMWLNGQDFGVSDQQFGLDYGFYAFDLPMLRLIADSLSMMLIVAFLIALVGHYLMGGIRAGNQMTGQKSFVSRGARTQLAVTAGLWMLVKVAGYWLDRYDLLTKENSTFTGASYTDINAQLPAKIILLVIALFVAIAFFSAIFLKDLRIPGLAVVLMLLSSVIIGAAWPLMLERFSVQPNRAEKEAEYISRNIESTRYAYGITDEDVTYEENWGAGETTNEEVAADSATISNIRLLDPQILSPTFTQQQQLRNFYGFPDQLAMDRFEVDGKLRDFVVAARELDPNALQQNQQDWINRHTVYTHGNGFIAAQANQVDEVARDVGSTRGGYPVYTVSDLQSNARAAESEDAEELGIKVDEPRVYYGPLIASATDGADYAIVGDTGDGPVEYDTDTSSYTYEGAGGVDIGNMVNRAMFALRYQEMNMLLSDRVGSESKILFERDPRSRVEKVAPWLTTDSKTYPTVIDGRIKWIVDGYTTLDSLPYSTRTSLTEATQDAVMPDGTPQPLITDRVGYIRNSVKAVVDAYDGTVELYEFDTEDPVLKAWRGVFPDTVKDGSEISDELRAHLRYPEDLFKVQRDMLAKYNVDDSGTFFTNDAFWSVPGDPTAAEGRQELKQPPYYVVAADPETGESSFQLITPFRGLQREYLSAHMSASSDPVTYGEITVRVLPTDSVTQGPKQAQDAMMSSDQVAQDQTLWRGSNDLHNGNLLTLPVGGGEILYVEPIYSQRKDQASAFPKLLRVLVFYKGQVGYAPTIAEALSQVGIDPKEAQDIEEVDGTATTPSTDETDTDTDQPATETPTAPVSEAEGIAAINDALSNLEAARDSSFEEYGRALDALDRAVDSYQSAQ.

7 helical membrane-spanning segments follow: residues 19-39, 63-83, 115-135, 176-196, 215-235, 262-282, and 290-310; these read VTWIFAIIALVILIAPMSVGF, IVLFVIFALIAGFVTWLAGYF, VMVIIPIFVALLAGLIGQRSW, SMMLIVAFLIALVGHYLMGGI, TQLAVTAGLWMLVKVAGYWLD, KIILLVIALFVAIAFFSAIFL, and LAVVLMLLSSVIIGAAWPLML. A disordered region spans residues 904-944; the sequence is KEAQDIEEVDGTATTPSTDETDTDTDQPATETPTAPVSEAE. A compositionally biased stretch (low complexity) spans 929 to 939; that stretch reads DQPATETPTAP.

Belongs to the UPF0182 family.

Its subcellular location is the cell membrane. This Corynebacterium glutamicum (strain ATCC 13032 / DSM 20300 / JCM 1318 / BCRC 11384 / CCUG 27702 / LMG 3730 / NBRC 12168 / NCIMB 10025 / NRRL B-2784 / 534) protein is UPF0182 protein Cgl0786/cg0896.